Here is a 390-residue protein sequence, read N- to C-terminus: Methylthioribose-1-phosphate isomerase (390 aa).

Asp263 (proton donor) is an active-site residue.

It belongs to the eIF-2B alpha/beta/delta subunits family. MtnA subfamily.

The protein resides in the cytoplasm. It localises to the nucleus. It carries out the reaction 5-(methylsulfanyl)-alpha-D-ribose 1-phosphate = 5-(methylsulfanyl)-D-ribulose 1-phosphate. It participates in amino-acid biosynthesis; L-methionine biosynthesis via salvage pathway; L-methionine from S-methyl-5-thio-alpha-D-ribose 1-phosphate: step 1/6. In terms of biological role, catalyzes the interconversion of methylthioribose-1-phosphate (MTR-1-P) into methylthioribulose-1-phosphate (MTRu-1-P). In Meyerozyma guilliermondii (strain ATCC 6260 / CBS 566 / DSM 6381 / JCM 1539 / NBRC 10279 / NRRL Y-324) (Yeast), this protein is Methylthioribose-1-phosphate isomerase.